A 442-amino-acid chain; its full sequence is F-box/FBD/LRR-repeat protein At2g26030 (442 aa).

The F-box domain maps to 3-49; sequence CDRICELPDSLLTQVLSYLPTIDSVKTSVLSKRWEFLWLRVPVLDLK. 6 LRR repeats span residues 128 to 160, 162 to 187, 188 to 214, 234 to 260, 278 to 309, and 324 to 352; these read CNTL…HLED, WYYD…VLIR, PIDF…RLTF, YLNF…DIDS, KRDI…DRYS, and QAAV…ILDF. The region spanning 358-410 is the FBD domain; sequence PEQDGLTYVPQCLLSSLECVEIRELIMGEETGEKLVRYFLKNSVVLKKLILRL.

The polypeptide is F-box/FBD/LRR-repeat protein At2g26030 (Arabidopsis thaliana (Mouse-ear cress)).